Here is a 480-residue protein sequence, read N- to C-terminus: Aspartyl/glutamyl-tRNA(Asn/Gln) amidotransferase subunit B (480 aa).

It belongs to the GatB/GatE family. GatB subfamily. Heterotrimer of A, B and C subunits.

The catalysed reaction is L-glutamyl-tRNA(Gln) + L-glutamine + ATP + H2O = L-glutaminyl-tRNA(Gln) + L-glutamate + ADP + phosphate + H(+). The enzyme catalyses L-aspartyl-tRNA(Asn) + L-glutamine + ATP + H2O = L-asparaginyl-tRNA(Asn) + L-glutamate + ADP + phosphate + 2 H(+). In terms of biological role, allows the formation of correctly charged Asn-tRNA(Asn) or Gln-tRNA(Gln) through the transamidation of misacylated Asp-tRNA(Asn) or Glu-tRNA(Gln) in organisms which lack either or both of asparaginyl-tRNA or glutaminyl-tRNA synthetases. The reaction takes place in the presence of glutamine and ATP through an activated phospho-Asp-tRNA(Asn) or phospho-Glu-tRNA(Gln). The polypeptide is Aspartyl/glutamyl-tRNA(Asn/Gln) amidotransferase subunit B (Streptococcus pneumoniae serotype 19F (strain G54)).